A 59-amino-acid polypeptide reads, in one-letter code: MNKNEIETQPVTWLEEVSDQNFDEDVFGACSTNTFSLSDYWGNNGAWCTLTHECMAWCK.

Positions Met1–Ala29 are excised as a propeptide. Positions Cys30–Ser31 form a cross-link, lanthionine (Cys-Ser). 2,3-didehydrobutyrine occurs at positions 32 and 34. A 2,3-didehydroalanine (Ser) modification is found at Ser36. The lanthionine (Ser-Cys) cross-link spans Ser38–Cys48. 2 cross-links (beta-methyllanthionine (Thr-Cys)) span residues Thr49–Cys54 and Thr51–Cys58.

Post-translationally, maturation of lantibiotics involves the enzymatic conversion of Thr, and Ser into dehydrated AA and the formation of thioether bonds with cysteine. This is followed by membrane translocation and cleavage of the modified precursor. It is not established whether the 2,3-didehydrobutyrines are the E- or Z-isomers. In the NMR model they were assumed to be the Z-isomer.

The protein localises to the secreted. Its function is as follows. Lanthionine-containing peptide antibiotic (lantibiotic) active on Gram-positive bacteria. The bactericidal activity of lantibiotics is based on depolarization of energized bacterial cytoplasmic membranes, initiated by the formation of aqueous transmembrane pores. When present individually lacticin 3147 A1 exhibits strong activity towards L.lactis strain AM2, weak activity towards L.lactis strain HP and no activity towards L.lactis strain IFPL359, but when combined with lacticin 3147 A2 it displays strong activity towards all three strains. This chain is Lantibiotic lacticin 3147 A1, found in Lactococcus lactis subsp. lactis (Streptococcus lactis).